A 107-amino-acid chain; its full sequence is Putative double-stranded DNA mimic protein YpsIP31758_1954 (107 aa).

This sequence belongs to the putative dsDNA mimic protein family.

May act as a double-stranded DNA (dsDNA) mimic. Probably regulates the activity of a dsDNA-binding protein. The protein is Putative double-stranded DNA mimic protein YpsIP31758_1954 of Yersinia pseudotuberculosis serotype O:1b (strain IP 31758).